Consider the following 195-residue polypeptide: MKRSASVQRQTAETQVSVTVLLDGIGTQTISTGIPFFNHMLSLFAAHGFFDLTVQASGDIDVDFHHTVEDVGIVLGNSVNKALGDRKGIRRYGYAVTPMDEALAHAVIDLSNRPFLVFNVPSIPAAETGFGVQLAKEFFRAFAVNCGMTLHIRVDYGENEHHVIESVFKAVARALDMATSMDDRITGPLSTKGCI.

The protein belongs to the imidazoleglycerol-phosphate dehydratase family.

The protein resides in the cytoplasm. It catalyses the reaction D-erythro-1-(imidazol-4-yl)glycerol 3-phosphate = 3-(imidazol-4-yl)-2-oxopropyl phosphate + H2O. It participates in amino-acid biosynthesis; L-histidine biosynthesis; L-histidine from 5-phospho-alpha-D-ribose 1-diphosphate: step 6/9. The polypeptide is Imidazoleglycerol-phosphate dehydratase (Desulfosudis oleivorans (strain DSM 6200 / JCM 39069 / Hxd3) (Desulfococcus oleovorans)).